The primary structure comprises 1447 residues: Baculoviral IAP repeat-containing protein 1b (1447 aa).

BIR repeat units follow at residues 60-127, 159-227, and 278-345; these read EAKR…CEFL, EEAR…CEFL, and EELR…CVFL. Zn(2+)-binding residues include Cys-315, Cys-318, His-335, and Cys-342. The region spanning 508–802 is the NACHT domain; that stretch reads SVMCVEGEAG…EFLAAVRLTE (295 aa). ATP is bound at residue Lys-520.

Component of the NLRC4 inflammasome, at least composed of NLRC4, caspase-1 (CASP1) and some NAIP protein. Interacts with S.typhimurium (Salmonella) PrgJ and B.thailandensis BsaK.

Functionally, sensor component of the NLRC4 inflammasome that specifically recognizes and binds type III secretion system (T3SS) rod proteins such as S.typhimurium (Salmonella) PrgJ and B.thailandensis BsaK from pathogenic bacteria. Association of pathogenic bacteria proteins drives in turn drive assembly and activation of the NLRC4 inflammasome, promoting caspase-1 activation, cytokine production and macrophage pyroptosis. The NLRC4 inflammasome is activated as part of the innate immune response to a range of intracellular bacteria. The NLRC4 inflammasome senses Gram-negative bacteria such as L.pneumophila and P.aeruginosa, enteric pathogens S.typhimurium (Salmonella) and S.flexneri. Prevents motor-neuron apoptosis induced by a variety of signals. The sequence is that of Baculoviral IAP repeat-containing protein 1b (Naip2) from Mus musculus (Mouse).